Reading from the N-terminus, the 183-residue chain is Transmembrane protein 154 (183 aa).

Residues 1–22 form the signal peptide; that stretch reads MQAPRAALVFALVIALVPVGRG. At 23-75 the chain is on the extracellular side; it reads NYEELENSGDTTVESERPNKVTIPSTFAAVTIKETLNANINSTNFAPDENQLE. A helical transmembrane segment spans residues 76-96; sequence FILMVLIPLILLVLLLLSVVF. Over 97 to 183 the chain is Cytoplasmic; that stretch reads LATYYKRKRT…SNHNPSDSES (87 aa). The segment at 163 to 183 is disordered; the sequence is ECLPTLKEEKESNHNPSDSES. S179 is modified (phosphoserine).

Its subcellular location is the membrane. In Homo sapiens (Human), this protein is Transmembrane protein 154 (TMEM154).